Consider the following 1544-residue polypeptide: Arf-GAP with Rho-GAP domain, ANK repeat and PH domain-containing protein 3 (1544 aa).

Positions 4 to 68 (PQDLDIAVWL…LRLLQTGTEE (65 aa)) constitute an SAM domain. Disordered regions lie at residues 64-147 (TGTE…EQSS) and 167-194 (GRAQ…PTTG). Composition is skewed to pro residues over residues 82–97 (SPSP…PVPK) and 130–139 (EPSPRPPPLP). PH domains lie at 287 to 379 (TPLL…SCLK) and 394 to 483 (RPLR…EAVT). An Arf-GAP domain is found at 480–611 (EAVTETLSDY…LFRKPHPQYP (132 aa)). The segment at 504 to 527 (CADCGSSRPDWAAVNLGVVICKQC) adopts a C4-type zinc-finger fold. The Rho-GAP domain maps to 907-1088 (TGLQEQQMSR…ELIDGYISVF (182 aa)). Residues 1117–1210 (GDLIMEVYIE…ASLLLKKVPL (94 aa)) form the Ras-associating domain. The 103-residue stretch at 1223–1325 (ESPRVGLLRC…WTTSILKAQH (103 aa)) folds into the PH 3 domain. Residue Thr-1348 is modified to Phosphothreonine. Phosphotyrosine occurs at positions 1403 and 1408. The segment at 1422–1544 (STSFSTTREW…SSPPSSQPLT (123 aa)) is disordered. Residues 1438–1457 (PLTSQKSLDQPFLSKSSTLG) show a composition bias toward polar residues. Ser-1444 and Ser-1480 each carry phosphoserine. 2 stretches are compositionally biased toward low complexity: residues 1482 to 1492 (EEQLLQELSSL) and 1502 to 1527 (GLGS…TPGF).

In terms of assembly, interacts (via SAM domain) with INPPL1/SHIP2. Post-translationally, tyrosine phosphorylated at a low basal level. PDGF treatment stimulates phosphorylation. Tyrosine phosphorylation is increased in cells that are in the process of becoming attached to a substrate and that start spreading and flattening.

It localises to the cytoplasm. The protein localises to the cytoskeleton. Its subcellular location is the cell membrane. The protein resides in the cell projection. It is found in the lamellipodium. It localises to the ruffle. Functionally, phosphatidylinositol 3,4,5-trisphosphate-dependent GTPase-activating protein that modulates actin cytoskeleton remodeling by regulating ARF and RHO family members. Is activated by phosphatidylinositol 3,4,5-trisphosphate (PtdIns(3,4,5)P3) binding. Can be activated by phosphatidylinositol 3,4-bisphosphate (PtdIns(3,4,5)P2) binding, albeit with lower efficiency. Acts on ARF6, RAC1, RHOA and CDC42. Plays a role in the internalization of anthrax toxin. The protein is Arf-GAP with Rho-GAP domain, ANK repeat and PH domain-containing protein 3 (ARAP3) of Homo sapiens (Human).